A 244-amino-acid chain; its full sequence is T-cell immunoreceptor with Ig and ITIM domains (244 aa).

The signal sequence occupies residues 1–21 (MRWCLLLIWAQGLRQAPLASG). The 103-residue stretch at 22 to 124 (MMTGTIETTG…DGTYTGRIFL (103 aa)) folds into the Ig-like V-type domain. Residues 22–141 (MMTGTIETTG…AEHGARFQIP (120 aa)) are Extracellular-facing. Residues Asn32 and Asn101 are each glycosylated (N-linked (GlcNAc...) asparagine). The segment at 32-42 (NISAEKGGSII) is homodimerization. Cys45 and Cys108 are oxidised to a cystine. Residues 142–162 (LLGAMAATLVVICTAVIVVVA) form a helical membrane-spanning segment. Over 163–244 (LTRKKKALRI…GNCSFFTETG (82 aa)) the chain is Cytoplasmic. Position 225 is a phosphotyrosine (Tyr225). An ITIM motif motif is present at residues 229–234 (LSYRSL).

Homodimer in cis; binds with high affinity to PVR, forming a heterotetrameric assembly of two TIGIT and two PVR molecules. Binds with lower affinity to NECTIN2 and NECTIN3. Interacts with GRB2. Interacts with NECTIN4. Expressed at low levels on peripheral memory and regulatory CD4+ T-cells and NK cells and is up-regulated following activation of these cells (at protein level).

Its subcellular location is the cell membrane. In terms of biological role, inhibitory receptor that plays a role in the modulation of immune responses. Suppresses T-cell activation by promoting the generation of mature immunoregulatory dendritic cells. Upon binding to its ligands PVR/CD155 or NECTIN2/CD112, which are expressed on antigen-presenting cells, sends inhibitory signals to the T-cell or NK cell. Mechanistically, interaction with ligand leads to phosphorylation of the cytoplasmic tail by Src family tyrosine kinases such as FYN or LCK, allowing subsequent binding to adapter GRB2 and SHIP1/INPP5D. In turn, inhibits PI3K and MAPK signaling cascades. In addition, associates with beta-arrestin-2/ARRB2 to recruit SHIP1/INPP5D that suppresses autoubiquitination of TRAF6 and subsequently inhibits NF-kappa-B signaling pathway. Also acts as a receptor for NECTIN4 to inhibit NK cell cytotoxicity. This chain is T-cell immunoreceptor with Ig and ITIM domains (TIGIT), found in Homo sapiens (Human).